The chain runs to 504 residues: Sodium-coupled neutral amino acid symporter 2 (504 aa).

The tract at residues 1–28 (MNKAPAQMSRFNIAPDMDSSSTNSNEYT) is disordered. The Cytoplasmic segment spans residues 1-79 (MNKAPAQMSR…SPGSASFGMS (79 aa)). Positions 1-99 (MNKAPAQMSR…SGILGLSYAM (99 aa)) are regulates protein turnover upon amino acid deprivation. The segment covering 19-28 (SSSTNSNEYT) has biased composition (low complexity). The chain crosses the membrane as a helical span at residues 80–99 (VFNLGNAIMGSGILGLSYAM). Asn85 is a binding site for Na(+). Topologically, residues 100–105 (ANTGIA) are extracellular. Residues 106 to 126 (MFVILLVAVAIFSLYSVHLLL) traverse the membrane as a helical segment. At 127–161 (KTANEGGSLVYEQLGYKAFGIPGKLAASCSITMQN) the chain is on the cytoplasmic side. The chain crosses the membrane as a helical span at residues 162 to 180 (FGAMASYLYIVKYELPIVI). Over 181-189 (RAFLDSNDN) the chain is Extracellular. A helical membrane pass occupies residues 190 to 210 (AWYTNGDYLVLIVTMSIILPL). Residues 211–218 (SLLKNLGY) lie on the Cytoplasmic side of the membrane. The chain crosses the membrane as a helical span at residues 219 to 239 (LGYTSGFSLLCMVFFLIVVIY). Residues 240–285 (KKFQIPCPLPENFINITVNVSQPPQTNNSTDEECCKPKYFIFNSQT) are Extracellular-facing. A disulfide bond links Cys246 and Cys274. N-linked (GlcNAc...) asparagine glycosylation is found at Asn254 and Asn258. The helical transmembrane segment at 286–306 (VYAVPILTFAFVCHPAILPMY) threads the bilayer. Residues 307–322 (EELKDRSRRKMQNVAN) lie on the Cytoplasmic side of the membrane. A helical transmembrane segment spans residues 323–343 (VSFLGMFIMYLLAALFGYLTF). At 344–364 (NEAVEPELLHTYSKVYNFDVV) the chain is on the extracellular side. A helical transmembrane segment spans residues 365 to 385 (LLIVRLAVLTAVTLTVPVVLF). A Na(+)-binding site is contributed by Thr379. Residues 386–406 (PIRTSVNHLLGASKEFSWPRH) are Cytoplasmic-facing. Residues 407 to 427 (ICITVALLVCVNILVIFVPTI) form a helical membrane-spanning segment. Residues 428 to 429 (RD) lie on the Extracellular side of the membrane. Residues 430-450 (IFGFIGASAAAMLIFILPSAF) form a helical membrane-spanning segment. Over 451 to 465 (YIKLVKKESMKSVQK) the chain is Cytoplasmic. Residues 466-488 (IGATLFLIMGFLVMTGSMALIIM) form a helical membrane-spanning segment. The Extracellular segment spans residues 489 to 504 (DWIHNALSSEEHTGGH).

This sequence belongs to the amino acid/polyamine transporter 2 family.

It localises to the cell membrane. The enzyme catalyses L-alanine(in) + Na(+)(in) = L-alanine(out) + Na(+)(out). It carries out the reaction glycine(in) + Na(+)(in) = glycine(out) + Na(+)(out). It catalyses the reaction L-serine(in) + Na(+)(in) = L-serine(out) + Na(+)(out). The catalysed reaction is L-proline(in) + Na(+)(in) = L-proline(out) + Na(+)(out). The enzyme catalyses L-methionine(in) + Na(+)(in) = L-methionine(out) + Na(+)(out). It carries out the reaction L-histidine(in) + Na(+)(in) = L-histidine(out) + Na(+)(out). It catalyses the reaction L-asparagine(in) + Na(+)(in) = L-asparagine(out) + Na(+)(out). The catalysed reaction is L-glutamine(in) + Na(+)(in) = L-glutamine(out) + Na(+)(out). The enzyme catalyses L-threonine(in) + Na(+)(in) = L-threonine(out) + Na(+)(out). It carries out the reaction L-leucine(in) + Na(+)(in) = L-leucine(out) + Na(+)(out). It catalyses the reaction L-phenylalanine(in) + Na(+)(in) = L-phenylalanine(out) + Na(+)(out). Inhibited by N-methyl-D-glucamine. Inhibited by choline. Allosteric regulation of sodium ions binding by pH. Its function is as follows. Symporter that cotransports neutral amino acids and sodium ions from the extracellular to the intracellular side of the cell membrane. The transport is pH-sensitive, Li(+)-intolerant, electrogenic, driven by the Na(+) electrochemical gradient and cotransports of neutral amino acids and sodium ions with a stoichiometry of 1:1. This chain is Sodium-coupled neutral amino acid symporter 2, found in Danio rerio (Zebrafish).